We begin with the raw amino-acid sequence, 154 residues long: CS6 fimbrial subunit A (154 aa).

The N-terminal stretch at 1 to 18 is a signal peptide; it reads MKKTIGLILILASFGSHA.

The protein resides in the fimbrium. Its function is as follows. Fimbriae (also called pili), polar filaments radiating from the surface of the bacterium to a length of 0.5-1.5 micrometers and numbering 100-300 per cell, enable bacteria to colonize the epithelium of specific host organs. This is CS6 fimbrial subunit A (cssA) from Escherichia coli.